The following is a 219-amino-acid chain: Lipid transferase CIDEB (219 aa).

At T18 the chain carries Phosphothreonine. Positions 34–110 (PQRPFRVCDH…VLEQGQSWSP (77 aa)) constitute a CIDE-N domain.

This sequence belongs to the CIDE family. As to quaternary structure, interacts with DFFA. Interacts with DFFB; inhibited by DFFB. Interacts with APOB. Interacts with PREB/SEC12; facilitating loading of SCAP-SREBP into COPII vesicles. As to expression, highly enriched in the liver.

The protein resides in the lipid droplet. It is found in the endoplasmic reticulum membrane. Its subcellular location is the golgi apparatus. The protein localises to the cytoplasmic vesicle. It localises to the COPI-coated vesicle. Functionally, lipid transferase specifically expressed in hepatocytes, which promotes unilocular lipid droplet formation by mediating lipid droplet fusion. Lipid droplet fusion promotes their enlargement, restricting lipolysis and favoring lipid storage. Localizes on the lipid droplet surface, at focal contact sites between lipid droplets, and mediates atypical lipid droplet fusion by promoting directional net neutral lipid transfer from the smaller to larger lipid droplets. The transfer direction may be driven by the internal pressure difference between the contacting lipid droplet pair. Promotes lipid exchange and lipid droplet fusion in both small and large lipid droplet-containing hepatocytes. In addition to its role in lipid droplet fusion, also involved in cytoplasmic vesicle biogenesis and transport. Required for very-low-density lipoprotein (VLDL) lipidation and maturation. Probably involved in the biogenesis of VLDL transport vesicles by forming a COPII vesicle coat and facilitating the formation of endoplasmic reticulum-derived large vesicles. Also involved in sterol-regulated export of the SCAP-SREBP complex, composed of SCAP, SREBF1/SREBP1 and SREBF2/SREBP2, by promoting loading of SCAP-SREBP into COPII vesicles. May also activate apoptosis. The polypeptide is Lipid transferase CIDEB (Mus musculus (Mouse)).